The primary structure comprises 557 residues: Formate--tetrahydrofolate ligase (557 aa).

Residue 66–73 (TPAGEGKS) coordinates ATP.

This sequence belongs to the formate--tetrahydrofolate ligase family.

It catalyses the reaction (6S)-5,6,7,8-tetrahydrofolate + formate + ATP = (6R)-10-formyltetrahydrofolate + ADP + phosphate. Its pathway is one-carbon metabolism; tetrahydrofolate interconversion. This is Formate--tetrahydrofolate ligase from Lactobacillus johnsonii (strain CNCM I-12250 / La1 / NCC 533).